A 642-amino-acid chain; its full sequence is Threonine--tRNA ligase (642 aa).

In terms of domain architecture, TGS spans 1–61; sequence MPIITLPDGS…EADASLAIIT (61 aa). The tract at residues 243 to 534 is catalytic; the sequence is DHRKIGKQLD…LTEEYAGLFP (292 aa). Zn(2+) is bound by residues Cys334, His385, and His511.

Belongs to the class-II aminoacyl-tRNA synthetase family. As to quaternary structure, homodimer. The cofactor is Zn(2+).

It localises to the cytoplasm. The enzyme catalyses tRNA(Thr) + L-threonine + ATP = L-threonyl-tRNA(Thr) + AMP + diphosphate + H(+). In terms of biological role, catalyzes the attachment of threonine to tRNA(Thr) in a two-step reaction: L-threonine is first activated by ATP to form Thr-AMP and then transferred to the acceptor end of tRNA(Thr). Also edits incorrectly charged L-seryl-tRNA(Thr). In Aeromonas hydrophila subsp. hydrophila (strain ATCC 7966 / DSM 30187 / BCRC 13018 / CCUG 14551 / JCM 1027 / KCTC 2358 / NCIMB 9240 / NCTC 8049), this protein is Threonine--tRNA ligase.